A 91-amino-acid chain; its full sequence is Large ribosomal subunit protein bL31B (91 aa).

Belongs to the bacterial ribosomal protein bL31 family. Type B subfamily. In terms of assembly, part of the 50S ribosomal subunit.

The chain is Large ribosomal subunit protein bL31B from Neisseria gonorrhoeae (strain ATCC 700825 / FA 1090).